A 485-amino-acid polypeptide reads, in one-letter code: U4/U6 small nuclear ribonucleoprotein Prp31 homolog (485 aa).

Disordered stretches follow at residues 1-36 and 329-361; these read MATLEDSFLADLDELSDNEAELDENDGDVGKEEEDV and IEKWQEPPPARQPKPLPVPDSEPKKRRGGRRLR. Residues 11–36 show a composition bias toward acidic residues; it reads DLDELSDNEAELDENDGDVGKEEEDV. Positions 216–334 constitute a Nop domain; that stretch reads IAPNLSAIVG…IRKKIEKWQE (119 aa). Residues 334–348 show a composition bias toward pro residues; it reads EPPPARQPKPLPVPD. The span at 352-361 shows a compositional bias: basic residues; it reads KKRRGGRRLR. The Nuclear localization signal signature appears at 352 to 365; the sequence is KKRRGGRRLRKMKE.

Belongs to the PRP31 family. Component of the U4/U6-U5 tri-snRNP complex composed of the U4, U6 and U5 snRNAs and pre-mRNA-splicing factors. Interacts with STA1 and SOP1.

It localises to the nucleus. It is found in the cajal body. Its function is as follows. Involved in pre-mRNA splicing. Required for the assembly of the U4/U5/U6 tri-snRNP complex, one of the building blocks of the spliceosome. Functions in association with STA1 and ZOP1 in spliceosome dynamics and pre-mRNA splicing. Required for transcriptional regulation and pre-mRNA splicing of cold-responsive genes, such as LTI78/RD29A, KIN2/COR6.6 or COR15A, especially under cold stress. May play a role in stress response. Involved in transcriptional gene silencing of endogenous transposable elements, independently of the RNA-directed DNA methylation (RdDM) pathway. Seems not to participate in the small RNA biogenesis of the RdDM pathway. The sequence is that of U4/U6 small nuclear ribonucleoprotein Prp31 homolog from Arabidopsis thaliana (Mouse-ear cress).